The sequence spans 359 residues: Phospho-N-acetylmuramoyl-pentapeptide-transferase (359 aa).

The next 10 membrane-spanning stretches (helical) occupy residues 3 to 23 (QILI…PVLI), 55 to 75 (VAIV…GVVI), 84 to 104 (GLLV…DDLI), 117 to 137 (TAKT…ALQF), 156 to 176 (IATV…VVSA), 190 to 210 (LAAG…FWQF), 231 to 251 (LAII…WNAA), 255 to 275 (IFMG…LSVT), 283 to 303 (VVLG…ILAF), and 330 to 350 (VIIR…ALFY).

The protein belongs to the glycosyltransferase 4 family. MraY subfamily. Mg(2+) serves as cofactor.

The protein localises to the cell membrane. It carries out the reaction UDP-N-acetyl-alpha-D-muramoyl-L-alanyl-gamma-D-glutamyl-meso-2,6-diaminopimeloyl-D-alanyl-D-alanine + di-trans,octa-cis-undecaprenyl phosphate = di-trans,octa-cis-undecaprenyl diphospho-N-acetyl-alpha-D-muramoyl-L-alanyl-D-glutamyl-meso-2,6-diaminopimeloyl-D-alanyl-D-alanine + UMP. It functions in the pathway cell wall biogenesis; peptidoglycan biosynthesis. In terms of biological role, catalyzes the initial step of the lipid cycle reactions in the biosynthesis of the cell wall peptidoglycan: transfers peptidoglycan precursor phospho-MurNAc-pentapeptide from UDP-MurNAc-pentapeptide onto the lipid carrier undecaprenyl phosphate, yielding undecaprenyl-pyrophosphoryl-MurNAc-pentapeptide, known as lipid I. In Mycolicibacterium vanbaalenii (strain DSM 7251 / JCM 13017 / BCRC 16820 / KCTC 9966 / NRRL B-24157 / PYR-1) (Mycobacterium vanbaalenii), this protein is Phospho-N-acetylmuramoyl-pentapeptide-transferase.